The following is a 77-amino-acid chain: MPGCTSRLLPEGPFSRNQALAVTTAYLNVLIEDDQGTHFRLVIRNAEGQLRWRCWNFEPDAGKQLNPYLASEGILRQ.

It belongs to the UPF0401 family.

In Escherichia coli O6:K15:H31 (strain 536 / UPEC), this protein is UPF0401 protein ECP_3010.